The primary structure comprises 166 residues: Cold-inducible RNA-binding protein B (166 aa).

The RRM domain maps to 5 to 83 (GKLFIGGLNF…RQIRVDQAGK (79 aa)). Residues 68–166 (GKAVDGRQIR…DSYDSYATHE (99 aa)) are disordered. Positions 92–115 (YRGGSSGGRGFFRGGRGRGGGDRG) are enriched in gly residues. Residues 133–149 (GSRDYYSSGRSQGSYGD) are compositionally biased toward low complexity. The segment covering 157 to 166 (DSYDSYATHE) has biased composition (basic and acidic residues).

As to quaternary structure, interacts with prmt1. Interacts with elavl1/elrA (via RRM3). Associates with ribosomes. In terms of processing, methylated on arginine residues within RGG motifs. Methylation by prmt1 promotes cytoplasmic accumulation. In adults, most abundant in testis, ovary, brain and liver, with lower expression in kidney and heart.

The protein resides in the nucleus. Its subcellular location is the nucleoplasm. It localises to the cytoplasm. In terms of biological role, cold-inducible mRNA binding protein. Acts cooperatively with elavl1/elrA to stabilize AU-rich element (ARE)-containing mRNAs by binding to them and inhibiting their deadenylation. Essential for embryonic gastrulation and neural development, acting to maintain the expression of a set of adhesion molecules, and cell movement during embryogenesis. Required for pronephros development. The sequence is that of Cold-inducible RNA-binding protein B (cirbp-b) from Xenopus laevis (African clawed frog).